The following is a 296-amino-acid chain: Putative fatty acid elongase DDB_G0272012 (296 aa).

A run of 7 helical transmembrane segments spans residues 51–71 (FQILPSVISLYLVIIFSIKFL), 83–103 (VSILHNAILCIWSLVMCVGIL), 134–154 (WSYIFYISKFYELLDTVIIVL), 159–179 (LIFLHVYHHCIVVWLCWYFMY), 184–204 (LQLWVVFLNTFVHVFMYYFYF), 220–240 (MIQIIQFICLGIAGLLHSAAI), and 253–273 (AFISAYLINFSFLFLFSQFFV). Residues 277 to 290 (SNKPTSSSSTTTPT) show a composition bias toward low complexity. A disordered region spans residues 277–296 (SNKPTSSSSTTTPTKTKKID).

This sequence belongs to the ELO family.

The protein resides in the membrane. It carries out the reaction a very-long-chain acyl-CoA + malonyl-CoA + H(+) = a very-long-chain 3-oxoacyl-CoA + CO2 + CoA. Could be implicated in synthesis of very long chain fatty acids. The protein is Putative fatty acid elongase DDB_G0272012 of Dictyostelium discoideum (Social amoeba).